A 397-amino-acid chain; its full sequence is Tryptophan synthase beta chain (397 aa).

K88 is modified (N6-(pyridoxal phosphate)lysine).

This sequence belongs to the TrpB family. Tetramer of two alpha and two beta chains. The cofactor is pyridoxal 5'-phosphate.

The catalysed reaction is (1S,2R)-1-C-(indol-3-yl)glycerol 3-phosphate + L-serine = D-glyceraldehyde 3-phosphate + L-tryptophan + H2O. Its pathway is amino-acid biosynthesis; L-tryptophan biosynthesis; L-tryptophan from chorismate: step 5/5. Its function is as follows. The beta subunit is responsible for the synthesis of L-tryptophan from indole and L-serine. This Haemophilus influenzae (strain ATCC 51907 / DSM 11121 / KW20 / Rd) protein is Tryptophan synthase beta chain (trpB).